Consider the following 315-residue polypeptide: Ankyrin repeat domain-containing protein 54 (315 aa).

Residues 1 to 49 (MDGSSPLLAAAGSDGDRSSSEGEYTLAGGPSAGDTEKREGESPMEAAGA) are disordered. ANK repeat units follow at residues 124 to 153 (HAVKRLREAANSNDIDTVRRLLEDDTDPCA), 157 to 186 (KGRTALHFSSCNGNETIVQLLLSYGADPNQ), 190 to 219 (LGNTPLHLAACTNHVPVITTLLRGGARVDA), and 223 to 255 (AGRTPLHLARSKLNILQEGDSRSLETLRGEVTQ).

It localises to the nucleus. It is found in the cytoplasm. The protein resides in the midbody. Plays an important role in regulating intracellular signaling events associated with erythroid terminal differentiation. This chain is Ankyrin repeat domain-containing protein 54 (ankrd54), found in Danio rerio (Zebrafish).